The chain runs to 282 residues: RsbT co-antagonist protein RsbRC (282 aa).

Phosphoserine occurs at positions 165 and 174. The STAS domain occupies 165-276 (SAPVIVLFHS…STLASAIASD (112 aa)). Position 186 is a phosphothreonine (Thr-186).

In terms of assembly, probably present in the stressosome with RsbRA, RsbRB, RsbRD and RsbS. Post-translationally, phosphorylated by RsbT.

Functionally, one of 4 functionally non-identical RsbR paralogs, it functions in the environmental signaling branch of the general stress response. In terms of biological role, negative regulator of sigma-B activity. Non-phosphorylated RsbS binds to RsbT, preventing its association with RsbU. Requires any one of RsbRA, RsbRB, RsbRC or RsbRD to sequester RsbT. When RsbS and the RsbR paralog(s) are phosphorylated, they release RsbT, which can then bind and activate RsbU. The polypeptide is RsbT co-antagonist protein RsbRC (rsbRC) (Bacillus subtilis (strain 168)).